A 443-amino-acid chain; its full sequence is Phosphoglucosamine mutase (443 aa).

Residue Ser-102 is the Phosphoserine intermediate of the active site. Mg(2+) is bound by residues Ser-102, Asp-241, Asp-243, and Asp-245. At Ser-102 the chain carries Phosphoserine.

This sequence belongs to the phosphohexose mutase family. The cofactor is Mg(2+). Activated by phosphorylation.

The catalysed reaction is alpha-D-glucosamine 1-phosphate = D-glucosamine 6-phosphate. Catalyzes the conversion of glucosamine-6-phosphate to glucosamine-1-phosphate. The polypeptide is Phosphoglucosamine mutase (Acinetobacter baylyi (strain ATCC 33305 / BD413 / ADP1)).